The primary structure comprises 319 residues: Aspartate carbamoyltransferase catalytic subunit (319 aa).

Positions 55 and 56 each coordinate carbamoyl phosphate. Position 83 (Lys83) interacts with L-aspartate. Carbamoyl phosphate contacts are provided by Arg105, His144, and Gln147. L-aspartate is bound by residues Arg177 and Arg231. The carbamoyl phosphate site is built by Gly272 and Pro273.

This sequence belongs to the aspartate/ornithine carbamoyltransferase superfamily. ATCase family. In terms of assembly, heterododecamer (2C3:3R2) of six catalytic PyrB chains organized as two trimers (C3), and six regulatory PyrI chains organized as three dimers (R2).

It carries out the reaction carbamoyl phosphate + L-aspartate = N-carbamoyl-L-aspartate + phosphate + H(+). It participates in pyrimidine metabolism; UMP biosynthesis via de novo pathway; (S)-dihydroorotate from bicarbonate: step 2/3. Its function is as follows. Catalyzes the condensation of carbamoyl phosphate and aspartate to form carbamoyl aspartate and inorganic phosphate, the committed step in the de novo pyrimidine nucleotide biosynthesis pathway. The protein is Aspartate carbamoyltransferase catalytic subunit of Nocardia farcinica (strain IFM 10152).